The primary structure comprises 223 residues: Glycosylphosphatidylinositol anchor biosynthesis protein 11 (223 aa).

Transmembrane regions (helical) follow at residues 25–45, 52–72, 88–108, 120–140, 158–178, and 189–209; these read LAVV…SAGI, VMTQ…VVVL, MIAA…LVLF, FVCA…TYHL, VYAA…PIPY, and ITIL…GIAL.

This sequence belongs to the PIGF family.

The protein resides in the endoplasmic reticulum membrane. Its pathway is glycolipid biosynthesis; glycosylphosphatidylinositol-anchor biosynthesis. Acts in the GPI biosynthetic pathway between GlcNAc-PI synthesis and GPI transfer to protein. The sequence is that of Glycosylphosphatidylinositol anchor biosynthesis protein 11 (GPI11) from Yarrowia lipolytica (strain CLIB 122 / E 150) (Yeast).